The primary structure comprises 211 residues: MSTIIAIDGPAAAGKGTLARRLAAELGFDYLDTGLIYRAVGMKLARAGLDPADVALAERAARQLSPDDLAATDLRIDEAAQAASKVASIPGVRAALLDFQRRFAATPPGGKGAVLDGRDIGTVVCPEAQVKLFVTASVEKRAERRLKELQEKGLGAIYGTVLADMRERDERDTNRAVAPLVPAQDAAVLDTSDLDADQAFAAALGIIGSKR.

G9 to T17 contacts ATP.

This sequence belongs to the cytidylate kinase family. Type 1 subfamily.

Its subcellular location is the cytoplasm. It catalyses the reaction CMP + ATP = CDP + ADP. It carries out the reaction dCMP + ATP = dCDP + ADP. This Paramagnetospirillum magneticum (strain ATCC 700264 / AMB-1) (Magnetospirillum magneticum) protein is Cytidylate kinase.